A 93-amino-acid chain; its full sequence is Putative protein adenylyltransferase MJ0435 (93 aa).

A GSX(10)DXD motif motif is present at residues 26-40 (GSYARNEQKETSDID). Mg(2+) contacts are provided by Asp38, Asp40, and Asp70.

It belongs to the MntA antitoxin family. Probably forms a complex with cognate toxin MJ0434. Mg(2+) serves as cofactor.

The catalysed reaction is L-tyrosyl-[protein] + ATP = O-(5'-adenylyl)-L-tyrosyl-[protein] + diphosphate. It carries out the reaction O-(5'-adenylyl)-L-tyrosyl-[protein] + ATP = O-[5'-(adenylyl-(5'-&gt;3')-adenylyl)]-L-tyrosyl-[protein] + diphosphate. Its function is as follows. Probable antitoxin component of a putative type VII toxin-antitoxin (TA) system. Neutralizes cognate toxic MJ0434 by di-AMPylation. The chain is Putative protein adenylyltransferase MJ0435 from Methanocaldococcus jannaschii (strain ATCC 43067 / DSM 2661 / JAL-1 / JCM 10045 / NBRC 100440) (Methanococcus jannaschii).